We begin with the raw amino-acid sequence, 132 residues long: Small ribosomal subunit protein uS8 (132 aa).

This sequence belongs to the universal ribosomal protein uS8 family. In terms of assembly, part of the 30S ribosomal subunit. Contacts proteins S5 and S12.

One of the primary rRNA binding proteins, it binds directly to 16S rRNA central domain where it helps coordinate assembly of the platform of the 30S subunit. The sequence is that of Small ribosomal subunit protein uS8 from Lactococcus lactis subsp. lactis (strain IL1403) (Streptococcus lactis).